A 223-amino-acid chain; its full sequence is Ubiquitin-conjugating enzyme E2 S-A (223 aa).

Residues 11–157 form the UBC core domain; it reads HIIRLVYKEV…ARLLTEIHGG (147 aa). Cys-95 functions as the Glycyl thioester intermediate in the catalytic mechanism. The segment at 170-223 is disordered; it reads QDLASGASASSADPMIPGVLGGAEGPMAKKHAGERDKKLAAKKKLDKKRALRRL. Over residues 209–223 the composition is skewed to basic residues; the sequence is AAKKKLDKKRALRRL.

The protein belongs to the ubiquitin-conjugating enzyme family.

The catalysed reaction is S-ubiquitinyl-[E1 ubiquitin-activating enzyme]-L-cysteine + [E2 ubiquitin-conjugating enzyme]-L-cysteine = [E1 ubiquitin-activating enzyme]-L-cysteine + S-ubiquitinyl-[E2 ubiquitin-conjugating enzyme]-L-cysteine.. It participates in protein modification; protein ubiquitination. Catalyzes the covalent attachment of ubiquitin to other proteins. Acts as an essential factor of the anaphase promoting complex/cyclosome (APC/C), a cell cycle-regulated ubiquitin ligase that controls progression through mitosis. Acts by specifically elongating 'Lys-11'-linked polyubiquitin chains initiated by the E2 enzyme ube2c/ubch10 on APC/C substrates, enhancing the degradation of APC/C substrates by the proteasome and promoting mitotic exit. This is Ubiquitin-conjugating enzyme E2 S-A (ube2s-a) from Xenopus laevis (African clawed frog).